A 115-amino-acid polypeptide reads, in one-letter code: NAD(P)H-quinone oxidoreductase subunit M (115 aa).

It belongs to the complex I NdhM subunit family. In terms of assembly, NDH-1 can be composed of about 15 different subunits; different subcomplexes with different compositions have been identified which probably have different functions.

It localises to the cellular thylakoid membrane. The catalysed reaction is a plastoquinone + NADH + (n+1) H(+)(in) = a plastoquinol + NAD(+) + n H(+)(out). It catalyses the reaction a plastoquinone + NADPH + (n+1) H(+)(in) = a plastoquinol + NADP(+) + n H(+)(out). Its function is as follows. NDH-1 shuttles electrons from an unknown electron donor, via FMN and iron-sulfur (Fe-S) centers, to quinones in the respiratory and/or the photosynthetic chain. The immediate electron acceptor for the enzyme in this species is believed to be plastoquinone. Couples the redox reaction to proton translocation, and thus conserves the redox energy in a proton gradient. Cyanobacterial NDH-1 also plays a role in inorganic carbon-concentration. In Parasynechococcus marenigrum (strain WH8102), this protein is NAD(P)H-quinone oxidoreductase subunit M.